We begin with the raw amino-acid sequence, 878 residues long: Coatomer subunit gamma (878 aa).

HEAT repeat units lie at residues 64-101 (REAT…VAED), 287-324 (RMLS…THPA), 326-359 (VTTC…GAES), 360-396 (SVER…KYPR), 399-434 (TVLM…ENAD), and 471-508 (ATPS…SCPA).

This sequence belongs to the COPG family. As to quaternary structure, oligomeric complex that consists of at least the alpha, beta, beta', gamma, delta, epsilon and zeta subunits.

Its subcellular location is the cytoplasm. The protein localises to the golgi apparatus membrane. It localises to the cytoplasmic vesicle. It is found in the COPI-coated vesicle membrane. The protein resides in the endoplasmic reticulum. In terms of biological role, the coatomer is a cytosolic protein complex that binds to dilysine motifs and reversibly associates with Golgi non-clathrin-coated vesicles, which further mediate biosynthetic protein transport from the ER, via the Golgi up to the trans Golgi network. Coatomer complex is required for budding from Golgi membranes, and is essential for the retrograde Golgi-to-ER transport of dilysine-tagged proteins. Required for limiting lipid storage in lipid droplets. Involved in the expansion of luminal extracellular matrices and apical membrane during tubulogenesis. Required in the tracheal epithelium for luminal protein secretion and diametric tube growth. In salivary glands, required for deposition of O-glycans and luminal extracellular matrix assembly. Required for epidermal morphogenesis and cuticle development. The chain is Coatomer subunit gamma from Drosophila pseudoobscura pseudoobscura (Fruit fly).